The primary structure comprises 542 residues: MGAYLSQPNTVKCSGDGVGAPRLPLPYGFSAMQGWRVSMEDAHNCIPELDNETAMFSVYDGHGGEEVALYCAKYLPDIIKDQKAYKEGKLQKALQDAFLAIDAKLTTDEVIKELAQIAGRPTEDEDDKEKVADEDDVDNEEAALLHEEATMTIEELLTRYGQNCQKGPPHTKSGTGIGDEPEPQGLNGEAGPEDPSRETPSQENGPTAKGHTGPSSNSDHGTEAGQIGEPGTATGEAGPSCSSASDKLPRVAKSKFFEDSEDESDEVEEEEDDIEECSEDEDGYSSEEAENEEDEDDTEEAEEDDDEEMMVPGMEGKEEPGSDSGTTAVVALIRGKQLIVANAGDSRCVVSEAGKALDMSYDHKPEDEVELARIKNAGGKVTMDGRVNGGLNLSRAIGDHFYKRNKNLPPQEQMISALPDIKVLTLTDDHEFMVIACDGIWNVMSSQEVVDFIQSKISQRDENGELRLLSSIVEELLDQCLAPDTSGDGTGCDNMTCIIICFKPRNTVELQPESGKRKLEEALSTEGAEENGNSDKKKAKRD.

The N-myristoyl glycine moiety is linked to residue Gly2. Arg22 carries the post-translational modification Omega-N-methylarginine. The 477-residue stretch at 26-502 (PYGFSAMQGW…DNMTCIIICF (477 aa)) folds into the PPM-type phosphatase domain. Positions 60 and 61 each coordinate Mn(2+). Disordered stretches follow at residues 118-139 (AGRPTEDEDDKEKVADEDDVDN) and 162-325 (QNCQ…SDSG). Residue Thr122 is modified to Phosphothreonine. Composition is skewed to acidic residues over residues 123-139 (EDEDDKEKVADEDDVDN) and 259-309 (DSED…DEEM). Lys380 carries the N6-acetyllysine modification. Positions 438 and 493 each coordinate Mn(2+). The interval 510 to 542 (LQPESGKRKLEEALSTEGAEENGNSDKKKAKRD) is disordered. Ser524 carries the post-translational modification Phosphoserine.

This sequence belongs to the PP2C family. As to quaternary structure, interacts with NOL3; may dephosphorylate NOL3. Mg(2+) serves as cofactor. The cofactor is Mn(2+).

It is found in the cytoplasm. Its subcellular location is the membrane. It carries out the reaction O-phospho-L-seryl-[protein] + H2O = L-seryl-[protein] + phosphate. The enzyme catalyses O-phospho-L-threonyl-[protein] + H2O = L-threonyl-[protein] + phosphate. In Rattus norvegicus (Rat), this protein is Protein phosphatase 1G.